Consider the following 348-residue polypeptide: Mitogen-activated protein kinase kinase 5 (348 aa).

2 disordered regions span residues 1–26 and 35–54; these read MKPI…DLSL and LAVP…PASS. Ser6 bears the Phosphoserine; by ASK7 mark. The 256-residue stretch at 70 to 325 folds into the Protein kinase domain; sequence LERVNRIGSG…AQQLLQHPFI (256 aa). Residues 76-84 and Lys99 contribute to the ATP site; that span reads IGSGAGGTV. Asp187 (proton acceptor) is an active-site residue. Thr215 is modified (phosphothreonine). Ser221 carries the post-translational modification Phosphoserine; by ASK7. Ser221 is modified (phosphoserine). A Phosphothreonine; by ASK7 modification is found at Thr225. Arg313 carries the post-translational modification ADP-ribosylarginine; by HopF2.

The protein belongs to the protein kinase superfamily. STE Ser/Thr protein kinase family. MAP kinase kinase subfamily. Interacts with P.syringae type III effector HopF2. Interacts with BZR1. Interacts with MPK6 and MPK3. Interacts with RACK1A, RACK1B and RACK1C. Interacts with MAPKKK5 mainly in the cytosol. Binds to BASL. Interacts with MAPKKK20. In terms of processing, phosphorylation at Thr-215 and Ser-221 by MAP kinase kinase kinases positively regulates kinase activity. Phosphorylated by MAPKKK5 and MAPKKK20 in response to abscisic acid (ABA). Post-translationally, ADP-ribosylation at Arg-313 by P.syringae type III effector HopF2 reduces the ability of the protein to phosphorylate downstream MPK6. In terms of tissue distribution, expressed higher in stems and leaves than in flowers and roots.

The enzyme catalyses L-seryl-[protein] + ATP = O-phospho-L-seryl-[protein] + ADP + H(+). It catalyses the reaction L-threonyl-[protein] + ATP = O-phospho-L-threonyl-[protein] + ADP + H(+). The catalysed reaction is L-tyrosyl-[protein] + ATP = O-phospho-L-tyrosyl-[protein] + ADP + H(+). With respect to regulation, activated through serine and threonine phosphorylation by MEKK1 and MAPKKK20 in response to abscisic acid (ABA). Inhibited through phosphorylation by GSK3/Shaggy-like kinase ASKs. Inhibited through ADP-Ribosylation by P.syringae HopF2. Activated after high light stress. Mitogen-activated protein kinase kinase (MAPKK) which regulates abscisic acid (ABA) responses in a MAPKKK20-MKK5-MPK6 cascade involved in root growth (e.g. root cell division and elongation) and stomatal response, probably via MAPK6 activation by protein phosphorylation. Involved in the second phase of hydrogen peroxide generation during hypersensitive response-like cell death. Involved in the innate immune MAP kinase signaling cascade (MEKK1, MKK4/MKK5 and MPK3/MPK6) downstream of bacterial flagellin receptor FLS2. Activates by phosphorylation the downstream MPK3 and MPK6. YDA-MKK4/MKK5-MPK3/MPK6 module regulates stomatal cell fate before the guard mother cell (GMC) is specified. This MAPK cascade also functions downstream of the ER receptor in regulating coordinated local cell proliferation, which shapes the morphology of plant organs. MKK4 and MKK5 participate in the regulation of floral organ abscission. Target of the Pseudomonas syringae type III effector HopF2, that inhibits the activation of the downstream MPK6 and PAMP-triggered immunity. Plays a critical role in high light stress tolerance by the mediation of the Cu/Zn SODs CSD1 and CSD2 gene expression. Phosphorylates BZR1 in vitro. The protein is Mitogen-activated protein kinase kinase 5 of Arabidopsis thaliana (Mouse-ear cress).